The primary structure comprises 77 residues: MKLIIFTGLVPFAIVSLIEAQAENEKACLPQYQVCTDAPGNCCSNLVCDCYGRYKSGTRIGRNCFCLQKGVIYKREN.

The N-terminal stretch at 1-20 is a signal peptide; the sequence is MKLIIFTGLVPFAIVSLIEA. The propeptide occupies 21-26; that stretch reads QAENEK.

This sequence belongs to the neurotoxin 19 (CSTX) family. 08 (U8-Lctx) subfamily. Post-translationally, contains 4 disulfide bonds. Expressed by the venom gland.

It localises to the secreted. The chain is U8-lycotoxin-Ls1t from Lycosa singoriensis (Wolf spider).